The chain runs to 174 residues: Co-chaperone protein HscB homolog (174 aa).

Residues 2–74 (NYFELFSLLP…IQRAEHLLAL (73 aa)) form the J domain.

It belongs to the HscB family. In terms of assembly, interacts with HscA and stimulates its ATPase activity.

In terms of biological role, co-chaperone involved in the maturation of iron-sulfur cluster-containing proteins. Seems to help targeting proteins to be folded toward HscA. The protein is Co-chaperone protein HscB homolog of Shewanella pealeana (strain ATCC 700345 / ANG-SQ1).